Here is a 412-residue protein sequence, read N- to C-terminus: Docking protein 2 (412 aa).

The 111-residue stretch at 4 to 114 (GAVKQGFLYL…WVQAICLLAF (111 aa)) folds into the PH domain. The IRS-type PTB domain maps to 147–252 (PHKEFAVTMR…SAQKNAAPAT (106 aa)). Residues 246-296 (KNAAPATPQPQPATIPASLPRPDSPYSRPHDSLPPPSPTTPVPAPRPRGQE) are disordered. A Phosphotyrosine modification is found at Tyr-271. Pro residues predominate over residues 277–291 (SLPPPSPTTPVPAPR). Phosphotyrosine is present on residues Tyr-299 and Tyr-345. Residues 359 to 412 (SPQEPRGEAWRRQATADRDPAGLQHVQPAGQDFSASGWQPGTEYDNVVLKKGPK) form a disordered region. Positions 361–378 (QEPRGEAWRRQATADRDP) are enriched in basic and acidic residues.

It belongs to the DOK family. Type A subfamily. Interacts with phosphorylated RASGAP and EGFR. Interacts with RET and NCK. Interacts (via PH domain) with TEK/TIE2 (tyrosine phosphorylated). As to quaternary structure, (Microbial infection) Interacts with Herpes simplex virus 1 (HHV-1) protein UL46; this interaction induces DOK2 phosphorylation and subsequent degradation. In terms of processing, on immunoreceptor stimulation, phosphorylated on C-terminal tyrosine residues. Phosphorylation on Tyr-345 is required for binding to the SH2 domain of NCK. Phosphorylation on both Tyr-271 and Tyr-299 is required for interaction with RASGAP. Phosphorylated on tyrosine residues by TEK/TIE2. Highly expressed in peripheral blood leukocytes, lymph nodes and spleen. Lower expression in thymus, bone marrow and fetal liver.

Its function is as follows. DOK proteins are enzymatically inert adaptor or scaffolding proteins. They provide a docking platform for the assembly of multimolecular signaling complexes. DOK2 may modulate the cellular proliferation induced by IL-4, as well as IL-2 and IL-3. May be involved in modulating Bcr-Abl signaling. Attenuates EGF-stimulated MAP kinase activation. The polypeptide is Docking protein 2 (DOK2) (Homo sapiens (Human)).